Here is a 459-residue protein sequence, read N- to C-terminus: NADP-specific glutamate dehydrogenase (459 aa).

Lys-116 is an active-site residue.

It belongs to the Glu/Leu/Phe/Val dehydrogenases family. Homohexamer.

It carries out the reaction L-glutamate + NADP(+) + H2O = 2-oxoglutarate + NH4(+) + NADPH + H(+). The chain is NADP-specific glutamate dehydrogenase (GDHA) from Schwanniomyces occidentalis (Yeast).